We begin with the raw amino-acid sequence, 83 residues long: Small ribosomal subunit protein uS17 (83 aa).

This sequence belongs to the universal ribosomal protein uS17 family. As to quaternary structure, part of the 30S ribosomal subunit.

In terms of biological role, one of the primary rRNA binding proteins, it binds specifically to the 5'-end of 16S ribosomal RNA. In Francisella tularensis subsp. holarctica (strain FTNF002-00 / FTA), this protein is Small ribosomal subunit protein uS17.